The primary structure comprises 337 residues: Methionine import ATP-binding protein MetN (337 aa).

The ABC transporter domain occupies 4–240 (IKNLEITYPG…PWHPITKEFV (237 aa)). 37–44 (GLSGAGKS) contacts ATP.

It belongs to the ABC transporter superfamily. Methionine importer (TC 3.A.1.24) family. In terms of assembly, the complex is composed of two ATP-binding proteins (MetN), two transmembrane proteins (MetI) and a solute-binding protein (MetQ).

The protein resides in the cell membrane. It catalyses the reaction L-methionine(out) + ATP + H2O = L-methionine(in) + ADP + phosphate + H(+). It carries out the reaction D-methionine(out) + ATP + H2O = D-methionine(in) + ADP + phosphate + H(+). Functionally, part of the ABC transporter complex MetNIQ involved in methionine import. Responsible for energy coupling to the transport system. The chain is Methionine import ATP-binding protein MetN from Carboxydothermus hydrogenoformans (strain ATCC BAA-161 / DSM 6008 / Z-2901).